The primary structure comprises 332 residues: T-cell surface glycoprotein CD1c3 (332 aa).

A signal peptide spans 1-17; the sequence is MLFLQFLFLDVVLGGSI. The Extracellular portion of the chain corresponds to 18-300; the sequence is TKNVVQENIS…IILYWGHGLS (283 aa). Asn25, Asn38, Asn75, and Asn146 each carry an N-linked (GlcNAc...) asparagine glycan. Intrachain disulfides connect Cys120–Cys184 and Cys224–Cys279. The Ig-like domain occupies 205 to 292; that stretch reads PEVWLSSSPN…HSSLRDQDII (88 aa). The chain crosses the membrane as a helical span at residues 301–321; the sequence is VILITFAVIVPLVLLIILVLL. The Cytoplasmic portion of the chain corresponds to 322–332; sequence CKKCCTYQGIP.

Heterodimer with B2M (beta-2-microglobulin).

It localises to the cell membrane. The protein resides in the endosome membrane. In terms of biological role, antigen-presenting protein that binds self and non-self lipid and glycolipid antigens and presents them to T-cell receptors on natural killer T-cells. This Cavia porcellus (Guinea pig) protein is T-cell surface glycoprotein CD1c3 (CD1C3).